The chain runs to 511 residues: uncharacterized protein (511 aa).

The next 3 membrane-spanning stretches (helical) occupy residues Ile33–Ala53, Ile59–Ser79, and Val97–Ile117. 3 positions are modified to phosphoserine: Ser147, Ser161, and Ser162. A disordered region spans residues Arg157–Pro180. 7 consecutive transmembrane segments (helical) span residues Leu216 to Phe236, Ile249 to Phe269, Met297 to Gly317, Ser332 to Val352, Val412 to Leu432, Ile449 to Val469, and Ile483 to Ile503.

The protein to yeast YCR061W.

The protein localises to the endoplasmic reticulum membrane. This is an uncharacterized protein from Schizosaccharomyces pombe (strain 972 / ATCC 24843) (Fission yeast).